Consider the following 497-residue polypeptide: Glycerol kinase (497 aa).

Threonine 12 contributes to the ADP binding site. ATP is bound by residues threonine 12, threonine 13, and serine 14. Residue threonine 12 participates in sn-glycerol 3-phosphate binding. Arginine 16 serves as a coordination point for ADP. Sn-glycerol 3-phosphate contacts are provided by arginine 82, glutamate 83, tyrosine 134, and aspartate 243. Arginine 82, glutamate 83, tyrosine 134, aspartate 243, and glutamine 244 together coordinate glycerol. ADP contacts are provided by threonine 265 and glycine 308. ATP is bound by residues threonine 265, glycine 308, glutamine 312, and glycine 409. ADP-binding residues include glycine 409 and asparagine 413.

The protein belongs to the FGGY kinase family. In terms of assembly, homotetramer and homodimer (in equilibrium).

The catalysed reaction is glycerol + ATP = sn-glycerol 3-phosphate + ADP + H(+). Its pathway is polyol metabolism; glycerol degradation via glycerol kinase pathway; sn-glycerol 3-phosphate from glycerol: step 1/1. With respect to regulation, activated by phosphorylation and inhibited by fructose 1,6-bisphosphate (FBP). Key enzyme in the regulation of glycerol uptake and metabolism. Catalyzes the phosphorylation of glycerol to yield sn-glycerol 3-phosphate. In Thermoanaerobacter pseudethanolicus (strain ATCC 33223 / 39E) (Clostridium thermohydrosulfuricum), this protein is Glycerol kinase.